A 44-amino-acid polypeptide reads, in one-letter code: Thymosin beta-4 (44 aa).

Positions 1–44 (MSDKPDMGEIQKFNKSKLKKTETQEKNPLPSKETIEQEKQAGES) are disordered. The residue at position 2 (serine 2) is an N-acetylserine. At serine 2 the chain carries Phosphoserine. Residue lysine 4 is modified to N6-acetyllysine. Lysine 12 is modified (N6-acetyllysine; alternate). Lysine 12 is covalently cross-linked (Glycyl lysine isopeptide (Lys-Gly) (interchain with G-Cter in SUMO2); alternate). Threonine 23 carries the phosphothreonine modification. The residue at position 26 (lysine 26) is an N6-acetyllysine. A Phosphoserine modification is found at serine 31. At lysine 32 the chain carries N6-acetyllysine. Residues 33 to 44 (ETIEQEKQAGES) show a composition bias toward basic and acidic residues. Threonine 34 bears the Phosphothreonine mark. Lysine 39 is modified (N6-acetyllysine).

The protein belongs to the thymosin beta family. In terms of assembly, identified in a complex composed of ACTA1, COBL, GSN AND TMSB4X. Interacts with SERPINB1. AcSDKP is inactivated by ACE, which removes the dipeptide Lys-Pro from its C-terminus.

It is found in the cytoplasm. The protein resides in the cytoskeleton. Its function is as follows. Plays an important role in the organization of the cytoskeleton. Binds to and sequesters actin monomers (G actin) and therefore inhibits actin polymerization. Functionally, potent inhibitor of bone marrow derived stem cell differentiation. Acts by inhibits the entry of hematopoietic pluripotent stem cells into the S-phase. The protein is Thymosin beta-4 (TMSB4) of Notamacropus eugenii (Tammar wallaby).